The chain runs to 64 residues: MAKAANMIKVEQIGSPIRRHHSQRETLIGLKLNKIGRVAELQDTPEVRGMIGKVQHLVRVVDEK.

As to quaternary structure, part of the 50S ribosomal subunit. Post-translationally, the protein is methylated on either Ala-2 or Lys-3.

This Rhodopseudomonas palustris (strain ATCC BAA-98 / CGA009) protein is Large ribosomal subunit protein uL30.